The chain runs to 192 residues: Epididymal-specific lipocalin-12 (192 aa).

The N-terminal stretch at 1 to 19 is a signal peptide; sequence MRLLCGLWLWLSLLKVLQA. A disulfide bridge links Cys-88 with Cys-192.

The protein belongs to the calycin superfamily. Lipocalin family. In terms of assembly, monomer.

It is found in the secreted. In terms of biological role, binds all-trans retinoic acid and may act as a retinoid carrier protein within the epididymis. May play a role in male fertility. The protein is Epididymal-specific lipocalin-12 (LCN12) of Homo sapiens (Human).